The chain runs to 215 residues: Large ribosomal subunit protein uL4 (215 aa).

The tract at residues 43–97 (RRQGTHSTKTRAEVSGGGKKPWRQKGTGRARAGSTRSPIWVGGGKTHTPKPRDYS) is disordered.

Belongs to the universal ribosomal protein uL4 family. Part of the 50S ribosomal subunit.

Functionally, one of the primary rRNA binding proteins, this protein initially binds near the 5'-end of the 23S rRNA. It is important during the early stages of 50S assembly. It makes multiple contacts with different domains of the 23S rRNA in the assembled 50S subunit and ribosome. Forms part of the polypeptide exit tunnel. This chain is Large ribosomal subunit protein uL4, found in Brachyspira pilosicoli (Serpulina pilosicoli).